The chain runs to 154 residues: Calmodulin-like protein 6 (154 aa).

EF-hand domains are found at residues 1–36, 37–72, 77–112, and 115–150; these read MDST…LGII, IPED…IMVE, VGEE…LGLK, and KTLE…GRFF. The Ca(2+) site is built by Asp14, Asp16, Asp18, Lys20, Glu25, Asp50, Asn52, Asp54, Cys56, Glu61, Asp90, Asn92, Asp94, Glu101, Asp128, Asp130, Asp132, Arg134, and Glu139.

This sequence belongs to the calmodulin family.

Functionally, potential calcium sensor. The sequence is that of Calmodulin-like protein 6 (CML6) from Arabidopsis thaliana (Mouse-ear cress).